Reading from the N-terminus, the 255-residue chain is Small ribosomal subunit protein eS1 (255 aa).

The span at 1–18 (MAVGKNKRLSKGKKGLKK) shows a compositional bias: basic residues. A disordered region spans residues 1-22 (MAVGKNKRLSKGKKGLKKRAQD). N-acetylalanine; partial is present on Ala2.

Belongs to the eukaryotic ribosomal protein eS1 family. In terms of assembly, component of the small ribosomal subunit. Mature ribosomes consist of a small (40S) and a large (60S) subunit. The 40S subunit contains about 33 different proteins and 1 molecule of RNA (18S). The 60S subunit contains about 49 different proteins and 3 molecules of RNA (25S, 5.8S and 5S).

It is found in the cytoplasm. The chain is Small ribosomal subunit protein eS1 from Uncinocarpus reesii (strain UAMH 1704).